A 458-amino-acid polypeptide reads, in one-letter code: Flap endonuclease 1 (458 aa).

An N-domain region spans residues 1-105 (MGIKGLTGLL…GVLSKRFEKR (105 aa)). Asp34 contributes to the Mg(2+) binding site. The DNA site is built by Arg47 and Arg71. Asp87, Glu159, Glu161, Asp180, and Asp182 together coordinate Mg(2+). The tract at residues 123–254 (DVDRFSRRTV…KSALKLIREF (132 aa)) is I-domain. Glu159 lines the DNA pocket. DNA-binding residues include Gly232 and Asp234. Residue Asp234 participates in Mg(2+) binding. Disordered stretches follow at residues 268 to 347 (AAAR…IPDE) and 416 to 458 (GFFT…AKKK). Composition is skewed to acidic residues over residues 275–285 (AEEEDEEEAEE) and 293–309 (EMPD…DEEE). Over residues 310 to 329 (AERRKKAEAAKKKKAQEKAK) the composition is skewed to basic and acidic residues. Positions 410 to 418 (QQGRLDGFF) are interaction with PCNA. Residues 442-452 (RKGEDKAEGSG) show a composition bias toward basic and acidic residues.

It belongs to the XPG/RAD2 endonuclease family. FEN1 subfamily. As to quaternary structure, interacts with PCNA. Three molecules of FEN1 bind to one PCNA trimer with each molecule binding to one PCNA monomer. PCNA stimulates the nuclease activity without altering cleavage specificity. Mg(2+) serves as cofactor. Phosphorylated. Phosphorylation upon DNA damage induces relocalization to the nuclear plasma.

The protein localises to the nucleus. It is found in the nucleolus. It localises to the nucleoplasm. The protein resides in the mitochondrion. In terms of biological role, structure-specific nuclease with 5'-flap endonuclease and 5'-3' exonuclease activities involved in DNA replication and repair. During DNA replication, cleaves the 5'-overhanging flap structure that is generated by displacement synthesis when DNA polymerase encounters the 5'-end of a downstream Okazaki fragment. It enters the flap from the 5'-end and then tracks to cleave the flap base, leaving a nick for ligation. Also involved in the long patch base excision repair (LP-BER) pathway, by cleaving within the apurinic/apyrimidinic (AP) site-terminated flap. Acts as a genome stabilization factor that prevents flaps from equilibrating into structures that lead to duplications and deletions. Also possesses 5'-3' exonuclease activity on nicked or gapped double-stranded DNA, and exhibits RNase H activity. Also involved in replication and repair of rDNA and in repairing mitochondrial DNA. This Coprinopsis cinerea (strain Okayama-7 / 130 / ATCC MYA-4618 / FGSC 9003) (Inky cap fungus) protein is Flap endonuclease 1.